A 352-amino-acid polypeptide reads, in one-letter code: tRNA pseudouridine synthase D (352 aa).

Catalysis depends on Asp81, which acts as the Nucleophile. The TRUD domain occupies 157-303 (GVPNYFGTQR…MDHERRILRL (147 aa)).

Belongs to the pseudouridine synthase TruD family.

It carries out the reaction uridine(13) in tRNA = pseudouridine(13) in tRNA. Functionally, responsible for synthesis of pseudouridine from uracil-13 in transfer RNAs. The sequence is that of tRNA pseudouridine synthase D from Pseudomonas putida (strain GB-1).